Consider the following 84-residue polypeptide: Peptide Ctry2346 (84 aa).

The first 23 residues, 1 to 23 (MKTQTLLFTFSLVLLMVATQTEA), serve as a signal peptide directing secretion. Leucine amide is present on Leu33. A propeptide spanning residues 37 to 84 (GLLDNLLGKRGLLFGKRALTNQDLFDLAYDPSLSAADMDALEMLLENY) is cleaved from the precursor.

The protein belongs to the non-disulfide-bridged peptide (NDBP) superfamily. Short antimicrobial peptide (group 4) family. As to expression, expressed by the venom gland.

The protein localises to the secreted. Its subcellular location is the target cell membrane. In terms of biological role, antimicrobial peptide. The chain is Peptide Ctry2346 from Chaerilus tryznai (Scorpion).